A 69-amino-acid chain; its full sequence is Cold shock-like protein CspC (69 aa).

One can recognise a CSD domain in the interval 6–66 (GQVKWFNESK…GQKGPAAVNV (61 aa)).

It localises to the cytoplasm. This chain is Cold shock-like protein CspC (cspC), found in Buchnera aphidicola subsp. Acyrthosiphon pisum (strain APS) (Acyrthosiphon pisum symbiotic bacterium).